Here is a 450-residue protein sequence, read N- to C-terminus: Signal recognition particle protein (450 aa).

GTP is bound by residues 107 to 114, 190 to 194, and 248 to 251; these read GLQGSGKT, DTAGR, and TKTD.

The protein belongs to the GTP-binding SRP family. SRP54 subfamily. In terms of assembly, part of the signal recognition particle protein translocation system, which is composed of SRP and FtsY. SRP is a ribonucleoprotein composed of Ffh and a 4.5S RNA molecule.

It is found in the cytoplasm. The enzyme catalyses GTP + H2O = GDP + phosphate + H(+). Functionally, involved in targeting and insertion of nascent membrane proteins into the cytoplasmic membrane. Binds to the hydrophobic signal sequence of the ribosome-nascent chain (RNC) as it emerges from the ribosomes. The SRP-RNC complex is then targeted to the cytoplasmic membrane where it interacts with the SRP receptor FtsY. Interaction with FtsY leads to the transfer of the RNC complex to the Sec translocase for insertion into the membrane, the hydrolysis of GTP by both Ffh and FtsY, and the dissociation of the SRP-FtsY complex into the individual components. The polypeptide is Signal recognition particle protein (Buchnera aphidicola subsp. Baizongia pistaciae (strain Bp)).